Here is a 437-residue protein sequence, read N- to C-terminus: Type II methyltransferase M.HgiCII (437 aa).

Residues 4-431 (FRFIDLFAGI…KALPNDHLFE (428 aa)) enclose the SAM-dependent MTase C5-type domain. Cys-75 is an active-site residue.

It belongs to the class I-like SAM-binding methyltransferase superfamily. C5-methyltransferase family.

It catalyses the reaction a 2'-deoxycytidine in DNA + S-adenosyl-L-methionine = a 5-methyl-2'-deoxycytidine in DNA + S-adenosyl-L-homocysteine + H(+). Functionally, a methylase that recognizes the double-stranded sequence 5'-GGWCC-3', methylates C-? on both strands and protects the DNA from cleavage by the HgiCII endonuclease. This is Type II methyltransferase M.HgiCII from Herpetosiphon aurantiacus (Herpetosiphon giganteus).